A 757-amino-acid polypeptide reads, in one-letter code: 5-methyltetrahydropteroyltriglutamate--homocysteine methyltransferase (757 aa).

5-methyltetrahydropteroyltri-L-glutamate-binding positions include 15–18 and Lys-114; that span reads RELK. Residues 428 to 430 and Glu-481 each bind L-homocysteine; that span reads IGS. Residues 428–430 and Glu-481 each bind L-methionine; that span reads IGS. 5-methyltetrahydropteroyltri-L-glutamate contacts are provided by residues 512 to 513 and Trp-558; that span reads RC. Asp-596 provides a ligand contact to L-homocysteine. Asp-596 provides a ligand contact to L-methionine. Position 602 (Glu-602) interacts with 5-methyltetrahydropteroyltri-L-glutamate. The Zn(2+) site is built by His-639, Cys-641, and Glu-663. Catalysis depends on His-692, which acts as the Proton donor. Cys-724 is a Zn(2+) binding site.

This sequence belongs to the vitamin-B12 independent methionine synthase family. Requires Zn(2+) as cofactor.

The catalysed reaction is 5-methyltetrahydropteroyltri-L-glutamate + L-homocysteine = tetrahydropteroyltri-L-glutamate + L-methionine. The protein operates within amino-acid biosynthesis; L-methionine biosynthesis via de novo pathway; L-methionine from L-homocysteine (MetE route): step 1/1. Catalyzes the transfer of a methyl group from 5-methyltetrahydrofolate to homocysteine resulting in methionine formation. In Lactococcus lactis subsp. cremoris (strain MG1363), this protein is 5-methyltetrahydropteroyltriglutamate--homocysteine methyltransferase.